The chain runs to 792 residues: Phenylalanine--tRNA ligase beta subunit (792 aa).

A tRNA-binding domain is found at 39-147 (GESLGQVVVA…DDAPVGQALA (109 aa)). The region spanning 400–475 (PQPARILLRR…RIHGYDRVPT (76 aa)) is the B5 domain. Residues Asp-453, Asp-459, Glu-462, and Asp-463 each coordinate Mg(2+). The FDX-ACB domain occupies 698-791 (SRFPSVRRDL…IEREHRARIR (94 aa)).

The protein belongs to the phenylalanyl-tRNA synthetase beta subunit family. Type 1 subfamily. In terms of assembly, tetramer of two alpha and two beta subunits. Requires Mg(2+) as cofactor.

It localises to the cytoplasm. The catalysed reaction is tRNA(Phe) + L-phenylalanine + ATP = L-phenylalanyl-tRNA(Phe) + AMP + diphosphate + H(+). The sequence is that of Phenylalanine--tRNA ligase beta subunit from Xanthomonas oryzae pv. oryzae (strain MAFF 311018).